We begin with the raw amino-acid sequence, 282 residues long: Stress response regulator protein 1 (282 aa).

Low complexity-rich tracts occupy residues 12 to 30 and 45 to 58; these read NLSRSSSPAAPPTTNHSST and NSQSDSNSTQSNNN. 3 disordered regions span residues 12 to 31, 43 to 84, and 112 to 139; these read NLSRSSSPAAPPTTNHSSTV, DINS…DDED, and LTPFDGQTTSPQDSIISSKSSNKSTTVV. The span at 66 to 77 shows a compositional bias: polar residues; sequence SDYNSYTHNQYY. The span at 125–139 shows a compositional bias: low complexity; it reads SIISSKSSNKSTTVV. Residues 155–273 enclose the Response regulatory domain; the sequence is SFLIVDDNII…LDFMANSIDD (119 aa). 4-aspartylphosphate is present on Asp206.

In terms of biological role, required for stress adaptation, morphogenesis and virulence. This Candida albicans (strain SC5314 / ATCC MYA-2876) (Yeast) protein is Stress response regulator protein 1 (SRR1).